The sequence spans 333 residues: Gap junction alpha-4 protein (333 aa).

Over methionine 1–valine 20 the chain is Cytoplasmic. Residues valine 21–alanine 40 form a helical membrane-spanning segment. Topologically, residues glycine 41–arginine 76 are extracellular. A helical membrane pass occupies residues tyrosine 77–leucine 99. The Cytoplasmic portion of the chain corresponds to serine 100–arginine 148. Residues glycine 149–tyrosine 171 traverse the membrane as a helical segment. Over glycine 172–isoleucine 208 the chain is Extracellular. Residues phenylalanine 209–leucine 231 traverse the membrane as a helical segment. Topologically, residues leucine 232–valine 333 are cytoplasmic. The interval alanine 292–valine 333 is disordered. A compositionally biased stretch (polar residues) spans serine 321–valine 333.

This sequence belongs to the connexin family. Alpha-type (group II) subfamily. As to quaternary structure, a connexon is composed of a hexamer of connexins. Highly expressed in lung.

The protein resides in the cell membrane. It localises to the cell junction. The protein localises to the gap junction. One gap junction consists of a cluster of closely packed pairs of transmembrane channels, the connexons, through which materials of low MW diffuse from one cell to a neighboring cell. This is Gap junction alpha-4 protein (Gja4) from Mus musculus (Mouse).